A 186-amino-acid chain; its full sequence is MEKVDVYDELVNLKATELRLGLPGTEETVSCGKSNKRVLPEATEKEIESTGKTETASPPKAQIVGWPPVRSYRKNNVQTKKSESEGQGNYVKVSMDGAPYLRKIDLTMYKQYPELMKSLENMFKFSVGEYFEREGYKGSDFVPTYEDKDGDWMLVGDVPWEMFVSSCKRLRIMKGSEVKGLGCGGL.

Residues 18–22 (LRLGL) carry the EAR-like (transcriptional repression) motif. Residues 25-62 (TEETVSCGKSNKRVLPEATEKEIESTGKTETASPPKAQ) form a disordered region. The span at 38–51 (VLPEATEKEIESTG) shows a compositional bias: basic and acidic residues. The PB1 domain occupies 88–175 (GNYVKVSMDG…SCKRLRIMKG (88 aa)).

This sequence belongs to the Aux/IAA family. As to quaternary structure, homodimers and heterodimers. Interacts with TPL. As to expression, preferentially expressed in stems, leaves and flowers.

The protein resides in the nucleus. In terms of biological role, aux/IAA proteins are short-lived transcriptional factors that function as repressors of early auxin response genes at low auxin concentrations. Repression is thought to result from the interaction with auxin response factors (ARFs), proteins that bind to the auxin-responsive promoter element (AuxRE). Formation of heterodimers with ARF proteins may alter their ability to modulate early auxin response genes expression. The sequence is that of Auxin-responsive protein IAA4 (IAA4) from Arabidopsis thaliana (Mouse-ear cress).